We begin with the raw amino-acid sequence, 250 residues long: Triosephosphate isomerase (250 aa).

9 to 11 (NWK) contributes to the substrate binding site. Residue His95 is the Electrophile of the active site. Glu167 functions as the Proton acceptor in the catalytic mechanism. Substrate is bound by residues Gly173, Ser213, and 234-235 (GG).

This sequence belongs to the triosephosphate isomerase family. Homodimer.

It is found in the cytoplasm. It catalyses the reaction D-glyceraldehyde 3-phosphate = dihydroxyacetone phosphate. The protein operates within carbohydrate biosynthesis; gluconeogenesis. Its pathway is carbohydrate degradation; glycolysis; D-glyceraldehyde 3-phosphate from glycerone phosphate: step 1/1. Involved in the gluconeogenesis. Catalyzes stereospecifically the conversion of dihydroxyacetone phosphate (DHAP) to D-glyceraldehyde-3-phosphate (G3P). This Flavobacterium johnsoniae (strain ATCC 17061 / DSM 2064 / JCM 8514 / BCRC 14874 / CCUG 350202 / NBRC 14942 / NCIMB 11054 / UW101) (Cytophaga johnsonae) protein is Triosephosphate isomerase.